The following is a 208-amino-acid chain: Translation initiation factor 2 subunit beta (208 aa).

Residues 145 to 203 (VIEEGETYELRIESVGSKGDGIAKVDKYLIFVPNTSKGEIVKAKVKKISGTLAFAEIVE) form the TRAM domain.

It belongs to the eIF-2-beta/eIF-5 family. As to quaternary structure, heterotrimer composed of an alpha, a beta and a gamma chain.

EIF-2 functions in the early steps of protein synthesis by forming a ternary complex with GTP and initiator tRNA. This Methanothrix thermoacetophila (strain DSM 6194 / JCM 14653 / NBRC 101360 / PT) (Methanosaeta thermophila) protein is Translation initiation factor 2 subunit beta.